A 360-amino-acid polypeptide reads, in one-letter code: Geranylgeranyl pyrophosphate synthase 12, chloroplastic (360 aa).

The N-terminal 39 residues, 1 to 39 (MANTVHLSSSSLFIQTRGRKYNSILSFNNLQKRTVLSLS), are a transit peptide targeting the chloroplast. Isopentenyl diphosphate-binding residues include Lys-106, Arg-109, and His-138. Residues Asp-145 and Asp-151 each coordinate Mg(2+). Arg-156 is a binding site for dimethylallyl diphosphate. Residue Arg-157 participates in isopentenyl diphosphate binding. Dimethylallyl diphosphate is bound by residues Lys-245, Thr-246, Gln-283, Lys-300, and Lys-310.

The protein belongs to the FPP/GGPP synthase family. Monomer. Mg(2+) is required as a cofactor.

The protein localises to the plastid. It localises to the chloroplast. It carries out the reaction isopentenyl diphosphate + dimethylallyl diphosphate = (2E)-geranyl diphosphate + diphosphate. It catalyses the reaction isopentenyl diphosphate + (2E)-geranyl diphosphate = (2E,6E)-farnesyl diphosphate + diphosphate. The enzyme catalyses isopentenyl diphosphate + (2E,6E)-farnesyl diphosphate = (2E,6E,10E)-geranylgeranyl diphosphate + diphosphate. It functions in the pathway isoprenoid biosynthesis; farnesyl diphosphate biosynthesis; farnesyl diphosphate from geranyl diphosphate and isopentenyl diphosphate: step 1/1. It participates in isoprenoid biosynthesis; geranyl diphosphate biosynthesis; geranyl diphosphate from dimethylallyl diphosphate and isopentenyl diphosphate: step 1/1. The protein operates within isoprenoid biosynthesis; geranylgeranyl diphosphate biosynthesis; geranylgeranyl diphosphate from farnesyl diphosphate and isopentenyl diphosphate: step 1/1. Catalyzes the trans-addition of the three molecules of IPP onto DMAPP to form geranylgeranyl pyrophosphate. The protein is Geranylgeranyl pyrophosphate synthase 12, chloroplastic of Arabidopsis thaliana (Mouse-ear cress).